Reading from the N-terminus, the 49-residue chain is Putative exported peptide YydF (49 aa).

In terms of biological role, suggested to be the precursor for an exported, modified peptide that has antimicrobial and/or signaling properties. Synthesis requires YydG and YydH; the peptide is proposed to be exported by the YydIJ transporter. In the absence of the transporter, the modified peptide activates the LiaRS two-component regulatory system, possibly by eliciting cell envelope stress. This activation can occur in trans in cocultured cells lacking either the transporter or the whole operon. This chain is Putative exported peptide YydF (yydF), found in Bacillus subtilis (strain 168).